Here is a 293-residue protein sequence, read N- to C-terminus: Small ribosomal subunit protein uS3 (293 aa).

The region spanning 39-107 (VREYLKAKLK…PVAVNIEEVR (69 aa)) is the KH type-2 domain. The tract at residues 210 to 293 (RNDLPAVETP…PATAADGKGE (84 aa)) is disordered. Residues 219–238 (PRPEEERRPRGPRRDGRPGG) are compositionally biased toward basic and acidic residues.

It belongs to the universal ribosomal protein uS3 family. In terms of assembly, part of the 30S ribosomal subunit. Forms a tight complex with proteins S10 and S14.

Binds the lower part of the 30S subunit head. Binds mRNA in the 70S ribosome, positioning it for translation. This Paracidovorax citrulli (strain AAC00-1) (Acidovorax citrulli) protein is Small ribosomal subunit protein uS3.